The following is a 979-amino-acid chain: Pheromone-regulated membrane protein 10 (979 aa).

Disordered stretches follow at residues 1-279 (MGKS…FFSK), 295-318 (LRNV…EVDG), 337-411 (YSSL…PQRV), 432-451 (FSTA…PLLD), and 491-528 (ATKH…LPKF). The segment covering 15-26 (GGKDARSPETRS) has biased composition (basic and acidic residues). Residues 29–38 (SRSSTDNRSS) are compositionally biased toward low complexity. The span at 54–68 (LDLEEGVDDDADFDW) shows a compositional bias: acidic residues. Positions 77 to 86 (DAQSLDNPFN) are enriched in polar residues. Over residues 105-115 (AIERDAVDTIR) the composition is skewed to basic and acidic residues. Over residues 122–135 (EEPDSASDGEDVGM) the composition is skewed to acidic residues. 2 stretches are compositionally biased toward basic and acidic residues: residues 138–148 (EYQRKRERLVD) and 158–175 (SPRR…HTET). Residues 192–213 (EAGTGTNENGEASSSGMKSSIN) show a composition bias toward polar residues. Residues 253-263 (GAEKGMKSMKD) are compositionally biased toward basic and acidic residues. Residues 360-372 (SPSTPSSSPGPES) are compositionally biased toward low complexity. Residues 379–395 (DDYDFDQVDSDGEDSDL) show a composition bias toward acidic residues. Positions 503-515 (ASGSNSELPSFKN) are enriched in polar residues. Residues 516 to 528 (TRPKKNKKHLPKF) are compositionally biased toward basic residues. A run of 10 helical transmembrane segments spans residues 658–678 (WVCV…AFGG), 680–700 (WVNL…QFIV), 710–730 (VFEI…GSIG), 734–754 (ICFG…YIIL), 773–793 (FYAI…AALF), 809–829 (PISP…ISLI), 832–852 (AHWI…VVTY), 864–884 (FTAS…SRVW), 886–906 (GLAV…GVAS), and 946–966 (ITMI…SLIV).

Belongs to the ThrE exporter (TC 2.A.79) family.

The protein resides in the membrane. This Zygosaccharomyces rouxii (strain ATCC 2623 / CBS 732 / NBRC 1130 / NCYC 568 / NRRL Y-229) protein is Pheromone-regulated membrane protein 10.